The primary structure comprises 395 residues: Acetylornithine aminotransferase (395 aa).

Residues 117–118 and Phe-144 contribute to the pyridoxal 5'-phosphate site; that span reads GA. Arg-147 contributes to the N(2)-acetyl-L-ornithine binding site. 230 to 233 serves as a coordination point for pyridoxal 5'-phosphate; it reads DEVQ. The residue at position 259 (Lys-259) is an N6-(pyridoxal phosphate)lysine. N(2)-acetyl-L-ornithine is bound at residue Ser-285. Residue Thr-286 coordinates pyridoxal 5'-phosphate.

It belongs to the class-III pyridoxal-phosphate-dependent aminotransferase family. ArgD subfamily. Homodimer. Pyridoxal 5'-phosphate serves as cofactor.

It is found in the cytoplasm. The catalysed reaction is N(2)-acetyl-L-ornithine + 2-oxoglutarate = N-acetyl-L-glutamate 5-semialdehyde + L-glutamate. It functions in the pathway amino-acid biosynthesis; L-arginine biosynthesis; N(2)-acetyl-L-ornithine from L-glutamate: step 4/4. The protein is Acetylornithine aminotransferase of Methanosarcina mazei (strain ATCC BAA-159 / DSM 3647 / Goe1 / Go1 / JCM 11833 / OCM 88) (Methanosarcina frisia).